Reading from the N-terminus, the 126-residue chain is Protein ApaG (126 aa).

The ApaG domain maps to 2-126 (SDTQHQVNVR…FRLAVPGALH (125 aa)).

The sequence is that of Protein ApaG from Pseudomonas aeruginosa (strain LESB58).